A 227-amino-acid polypeptide reads, in one-letter code: Claudin-15 (227 aa).

A topological domain (cytoplasmic) is located at residue M1. A helical transmembrane segment spans residues 2-24 (SVAVETFGFFMSALGLLMLGLTL). At 25-74 (SNSYWRVSTVHGNVITTNTIFENLWYSCATDSLGVSNCWDFPSMLALSGY) the chain is on the extracellular side. C52 and C62 are oxidised to a cystine. A helical transmembrane segment spans residues 75-99 (VQGCRALMITAILLGFLGLFLGMVG). Residues 100–115 (LRCTNVGNMDLSKKAK) are Cytoplasmic-facing. S111 is subject to Phosphoserine. A helical transmembrane segment spans residues 116 to 140 (LLAIAGTLHILAGACGMVAISWYAV). Topologically, residues 141-159 (NITTDFFNPLYAGTKYELG) are extracellular. The interval 146-147 (FF) is important for the formation of tight-junction strand-like structures. Residues 160–182 (PALYLGWSASLLSILGGICVFST) form a helical membrane-spanning segment. Residues 183 to 227 (CCCSSKEEPATRAGLPYKPSTVVIPRATSDESDISFGKYGKNAYV) are Cytoplasmic-facing. Phosphoserine occurs at positions 211, 214, and 217.

Belongs to the claudin family. Can form homo- and heteropolymeric tight junction strands. Palmitoylated when heterogeneously expressed in S.frugiperda cells. In terms of tissue distribution, detected in duodenum, jejunum and ileum. Detected on intestinal villi and crypts (at protein level). Ubiquitous. Detected in small and large intestine, colon, jejunum, heart, kidney and lung.

The protein localises to the cell junction. The protein resides in the tight junction. It localises to the cell membrane. The catalysed reaction is Na(+)(in) = Na(+)(out). It carries out the reaction K(+)(in) = K(+)(out). The enzyme catalyses Cs(+)(in) = Cs(+)(out). It catalyses the reaction Rb(+)(in) = Rb(+)(out). The catalysed reaction is Li(+)(in) = Li(+)(out). It carries out the reaction NH4(+)(in) = NH4(+)(out). The enzyme catalyses methylamine(out) = methylamine(in). It catalyses the reaction H2O(in) = H2O(out). In terms of biological role, forms paracellular channels: polymerizes in tight junction strands with cation- and water-selective channels through the strands, conveying epithelial permeability in a process known as paracellular tight junction permeability. In intestinal epithelium, allows for sodium and water fluxes from the peritoneal side to the lumen of the intestine to regulate nutrient absorption and intestinal morphogenesis. This chain is Claudin-15, found in Mus musculus (Mouse).